The primary structure comprises 658 residues: Translation factor GUF1, mitochondrial (658 aa).

A mitochondrion-targeting transit peptide spans 1–40 (MRGCLQTVRWLTSAWQRPRSYSPLSRAAPCRFFNVSIPRN). Positions 60–240 (DRFRNFCIVA…TVVEQIPAPV (181 aa)) constitute a tr-type G domain. GTP contacts are provided by residues 69–76 (AHVDHGKS), 133–137 (DTPGH), and 187–190 (NKVD).

It belongs to the TRAFAC class translation factor GTPase superfamily. Classic translation factor GTPase family. LepA subfamily.

Its subcellular location is the mitochondrion inner membrane. The enzyme catalyses GTP + H2O = GDP + phosphate + H(+). In terms of biological role, promotes mitochondrial protein synthesis. May act as a fidelity factor of the translation reaction, by catalyzing a one-codon backward translocation of tRNAs on improperly translocated ribosomes. Binds to mitochondrial ribosomes in a GTP-dependent manner. The chain is Translation factor GUF1, mitochondrial from Paracoccidioides lutzii (strain ATCC MYA-826 / Pb01) (Paracoccidioides brasiliensis).